The sequence spans 337 residues: Holliday junction branch migration complex subunit RuvB (337 aa).

The interval 1-179 is large ATPase domain (RuvB-L); it reads MTHQVSVLHQ…FSFTGRVAYY (179 aa). ATP contacts are provided by residues L18, R19, G60, K63, T64, S65, 126-128, R169, Y179, and R216; that span reads EDY. A Mg(2+)-binding site is contributed by T64. A small ATPAse domain (RuvB-S) region spans residues 180–250; sequence SDEDLATILR…VAEKALAMLL (71 aa). The segment at 253–337 is head domain (RuvB-H); sequence EWGLNEIDIK…DNLQSLGEEK (85 aa). DNA is bound by residues K308 and R313.

The protein belongs to the RuvB family. In terms of assembly, homohexamer. Forms an RuvA(8)-RuvB(12)-Holliday junction (HJ) complex. HJ DNA is sandwiched between 2 RuvA tetramers; dsDNA enters through RuvA and exits via RuvB. An RuvB hexamer assembles on each DNA strand where it exits the tetramer. Each RuvB hexamer is contacted by two RuvA subunits (via domain III) on 2 adjacent RuvB subunits; this complex drives branch migration. In the full resolvosome a probable DNA-RuvA(4)-RuvB(12)-RuvC(2) complex forms which resolves the HJ.

It localises to the cytoplasm. The catalysed reaction is ATP + H2O = ADP + phosphate + H(+). The RuvA-RuvB-RuvC complex processes Holliday junction (HJ) DNA during genetic recombination and DNA repair, while the RuvA-RuvB complex plays an important role in the rescue of blocked DNA replication forks via replication fork reversal (RFR). RuvA specifically binds to HJ cruciform DNA, conferring on it an open structure. The RuvB hexamer acts as an ATP-dependent pump, pulling dsDNA into and through the RuvAB complex. RuvB forms 2 homohexamers on either side of HJ DNA bound by 1 or 2 RuvA tetramers; 4 subunits per hexamer contact DNA at a time. Coordinated motions by a converter formed by DNA-disengaged RuvB subunits stimulates ATP hydrolysis and nucleotide exchange. Immobilization of the converter enables RuvB to convert the ATP-contained energy into a lever motion, pulling 2 nucleotides of DNA out of the RuvA tetramer per ATP hydrolyzed, thus driving DNA branch migration. The RuvB motors rotate together with the DNA substrate, which together with the progressing nucleotide cycle form the mechanistic basis for DNA recombination by continuous HJ branch migration. Branch migration allows RuvC to scan DNA until it finds its consensus sequence, where it cleaves and resolves cruciform DNA. This chain is Holliday junction branch migration complex subunit RuvB, found in Chlamydia abortus (strain DSM 27085 / S26/3) (Chlamydophila abortus).